We begin with the raw amino-acid sequence, 441 residues long: Glutamate--tRNA ligase 2 (441 aa).

Residues 9–19 (PSPTGYIHVGN) carry the 'HIGH' region motif. A 'KMSKS' region motif is present at residues 239–243 (ALSKR). K242 is an ATP binding site.

Belongs to the class-I aminoacyl-tRNA synthetase family. Glutamate--tRNA ligase type 1 subfamily. Monomer.

The protein resides in the cytoplasm. It carries out the reaction tRNA(Glu) + L-glutamate + ATP = L-glutamyl-tRNA(Glu) + AMP + diphosphate. Functionally, catalyzes the attachment of glutamate to tRNA(Glu) in a two-step reaction: glutamate is first activated by ATP to form Glu-AMP and then transferred to the acceptor end of tRNA(Glu). The sequence is that of Glutamate--tRNA ligase 2 from Cereibacter sphaeroides (strain ATCC 17023 / DSM 158 / JCM 6121 / CCUG 31486 / LMG 2827 / NBRC 12203 / NCIMB 8253 / ATH 2.4.1.) (Rhodobacter sphaeroides).